Consider the following 160-residue polypeptide: Salivary gland broad-spectrum antiviral protein (160 aa).

Residues Val17 to Leu37 form a helical membrane-spanning segment. N-linked (GlcNAc...) asparagine glycosylation is found at Asn62 and Asn145.

Salivary gland (at protein level).

The protein resides in the membrane. Functionally, (Microbial infection) Modulates replication of Zika virus in salivary glands. (Microbial infection) Modulates replication of dengue virus type 2 in salivary glands. In terms of biological role, (Microbial infection) Modulates replication of chikungunya virus in salivary glands. The protein is Salivary gland broad-spectrum antiviral protein of Aedes aegypti (Yellowfever mosquito).